We begin with the raw amino-acid sequence, 240 residues long: Proteasome subunit alpha (240 aa).

The protein belongs to the peptidase T1A family. The 20S proteasome core is composed of 14 alpha and 14 beta subunits that assemble into four stacked heptameric rings, resulting in a barrel-shaped structure. The two inner rings, each composed of seven catalytic beta subunits, are sandwiched by two outer rings, each composed of seven alpha subunits. The catalytic chamber with the active sites is on the inside of the barrel. Has a gated structure, the ends of the cylinder being occluded by the N-termini of the alpha-subunits. Is capped by the proteasome-associated ATPase, ARC.

It localises to the cytoplasm. It functions in the pathway protein degradation; proteasomal Pup-dependent pathway. The formation of the proteasomal ATPase ARC-20S proteasome complex, likely via the docking of the C-termini of ARC into the intersubunit pockets in the alpha-rings, may trigger opening of the gate for substrate entry. Interconversion between the open-gate and close-gate conformations leads to a dynamic regulation of the 20S proteasome proteolysis activity. Component of the proteasome core, a large protease complex with broad specificity involved in protein degradation. The polypeptide is Proteasome subunit alpha (Frankia casuarinae (strain DSM 45818 / CECT 9043 / HFP020203 / CcI3)).